The chain runs to 125 residues: Holo-[acyl-carrier-protein] synthase (125 aa).

Positions 8 and 57 each coordinate Mg(2+).

Belongs to the P-Pant transferase superfamily. AcpS family. It depends on Mg(2+) as a cofactor.

It is found in the cytoplasm. It catalyses the reaction apo-[ACP] + CoA = holo-[ACP] + adenosine 3',5'-bisphosphate + H(+). Transfers the 4'-phosphopantetheine moiety from coenzyme A to a Ser of acyl-carrier-protein. The sequence is that of Holo-[acyl-carrier-protein] synthase from Solibacter usitatus (strain Ellin6076).